The chain runs to 446 residues: Acyl-lipid (8-3)-desaturase (446 aa).

The region spanning Gly-6–Val-82 is the Cytochrome b5 heme-binding domain. His-41 and His-64 together coordinate heme. 2 consecutive transmembrane segments (helical) span residues Ala-125 to Val-145 and Leu-150 to Leu-170. The Histidine box-1 signature appears at His-171–His-175. The Histidine box-2 signature appears at His-207–His-212. The short motif at Gln-387–His-391 is the Histidine box-3 element.

The protein belongs to the fatty acid desaturase type 1 family. It depends on Fe(2+) as a cofactor.

The protein resides in the membrane. The enzyme catalyses an (8Z,11Z,14Z)-icosatrienoyl-containing glycerolipid + 2 Fe(II)-[cytochrome b5] + O2 + 2 H(+) = (5Z,8Z,11Z,14Z)-eicosatetraenoyl-containing glycerolipid + 2 Fe(III)-[cytochrome b5] + 2 H2O. It carries out the reaction an (8Z,11Z,14Z,17Z)-eicosatetraenoyl-containing glycerolipid + 2 Fe(II)-[cytochrome b5] + O2 + 2 H(+) = a (5Z,8Z,11Z,14Z,17Z)-eicosapentaenoyl-containing glycerolipid + 2 Fe(III)-[cytochrome b5] + 2 H2O. In terms of biological role, fatty acid desaturase that introduces a cis double bond at the 5-position in 20-carbon polyunsaturated fatty acids incorporated in a glycerolipid that contain a Delta(8) double bond. Involved in the conversion of di-homo-Delta-linolenic acid to arachidonic acid. Essential in the production of eicosanoids. The chain is Acyl-lipid (8-3)-desaturase (DES1) from Mortierella alpina (Oleaginous fungus).